We begin with the raw amino-acid sequence, 144 residues long: 3-dehydroquinate dehydratase (144 aa).

The Proton acceptor role is filled by Tyr22. Substrate contacts are provided by Asn73, His79, and Asp86. His99 functions as the Proton donor in the catalytic mechanism. Residues 100-101 (IS) and Arg110 each bind substrate.

It belongs to the type-II 3-dehydroquinase family. In terms of assembly, homododecamer.

It carries out the reaction 3-dehydroquinate = 3-dehydroshikimate + H2O. Its pathway is metabolic intermediate biosynthesis; chorismate biosynthesis; chorismate from D-erythrose 4-phosphate and phosphoenolpyruvate: step 3/7. In terms of biological role, catalyzes a trans-dehydration via an enolate intermediate. This Clostridium acetobutylicum (strain ATCC 824 / DSM 792 / JCM 1419 / IAM 19013 / LMG 5710 / NBRC 13948 / NRRL B-527 / VKM B-1787 / 2291 / W) protein is 3-dehydroquinate dehydratase.